A 157-amino-acid chain; its full sequence is S-ribosylhomocysteine lyase (157 aa).

Fe cation is bound by residues histidine 54, histidine 58, and cysteine 124.

It belongs to the LuxS family. As to quaternary structure, homodimer. It depends on Fe cation as a cofactor.

It carries out the reaction S-(5-deoxy-D-ribos-5-yl)-L-homocysteine = (S)-4,5-dihydroxypentane-2,3-dione + L-homocysteine. In terms of biological role, involved in the synthesis of autoinducer 2 (AI-2) which is secreted by bacteria and is used to communicate both the cell density and the metabolic potential of the environment. The regulation of gene expression in response to changes in cell density is called quorum sensing. Catalyzes the transformation of S-ribosylhomocysteine (RHC) to homocysteine (HC) and 4,5-dihydroxy-2,3-pentadione (DPD). The polypeptide is S-ribosylhomocysteine lyase (Oenococcus oeni (strain ATCC BAA-331 / PSU-1)).